A 130-amino-acid polypeptide reads, in one-letter code: Cuticle protein 14 isoform b (130 aa).

Positions Ile24–Asp90 constitute a Chitin-binding type R&amp;R domain.

This chain is Cuticle protein 14 isoform b, found in Limulus polyphemus (Atlantic horseshoe crab).